We begin with the raw amino-acid sequence, 351 residues long: Histidine protein kinase SaeS (351 aa).

Transmembrane regions (helical) follow at residues 9–29 (IIIG…IAYI) and 40–60 (TLTL…SIFI). In terms of domain architecture, HAMP spans 61 to 114 (NPLIQKIKQFNIKTKQFANGNYASNDKTFNSPKEIYELNQSFNKMASEITQQMN). Positions 129–348 (NLAHDLKTPL…TMTVTLHKLD (220 aa)) constitute a Histidine kinase domain. The residue at position 132 (His-132) is a Phosphohistidine; by autocatalysis.

Post-translationally, autophosphorylated.

The protein resides in the cell membrane. It carries out the reaction ATP + protein L-histidine = ADP + protein N-phospho-L-histidine.. Functionally, member of the two-component regulatory system SaeR/SaeS involved in the regulation of staphylococcal virulence factors in a strain-dependent fashion. Probably functions as a membrane-associated protein kinase that upon sensing the appropriate signal, autophosphorylates and in turn activates the cytosolic response regulator SaeR. SaeR/SaeS activates the expression of exoproteins involved in adhesion and invasion of host cells, including hemolysins (hla, hlb, hlgC), coa, DNase, spa and cell wall-associated proteins (emp, eap, fnbA, fnbB, efb). Represses the expression of type 5 capsular polysaccharide (cap operon). Also modulates the expression of several other genes. This chain is Histidine protein kinase SaeS (saeS), found in Staphylococcus aureus (strain Newman).